A 203-amino-acid polypeptide reads, in one-letter code: Cytochrome c biogenesis ATP-binding export protein CcmA (203 aa).

The ABC transporter domain occupies 2 to 203 (LEALDLAGVR…KTSQTVRMGA (202 aa)). 34-41 (GENGSGKT) is a binding site for ATP.

Belongs to the ABC transporter superfamily. CcmA exporter (TC 3.A.1.107) family. The complex is composed of two ATP-binding proteins (CcmA) and two transmembrane proteins (CcmB).

It localises to the cell inner membrane. It carries out the reaction heme b(in) + ATP + H2O = heme b(out) + ADP + phosphate + H(+). In terms of biological role, part of the ABC transporter complex CcmAB involved in the biogenesis of c-type cytochromes; once thought to export heme, this seems not to be the case, but its exact role is uncertain. Responsible for energy coupling to the transport system. The sequence is that of Cytochrome c biogenesis ATP-binding export protein CcmA from Pseudomonas aeruginosa.